A 418-amino-acid chain; its full sequence is Voltage-gated ClC-type chloride channel ClcB (418 aa).

10 helical membrane-spanning segments follow: residues 5 to 25 (LLIA…FRHA), 54 to 74 (LLTP…WQKF), 146 to 166 (LWIA…PLAG), 168 to 188 (LFIA…PVII), 222 to 242 (ALII…LTLM), 258 to 278 (WQLA…PAVW), 291 to 311 (APPL…AVLA), 316 to 336 (GAPG…GMLY), 352 to 372 (LLLG…APIM), and 380 to 400 (MTGE…ASVI).

Belongs to the chloride channel (TC 2.A.49) family. ClcB subfamily.

The protein resides in the cell inner membrane. Functionally, probably acts as an electrical shunt for an outwardly-directed proton pump that is linked to amino acid decarboxylation, as part of the extreme acid resistance (XAR) response. In Escherichia coli (strain SMS-3-5 / SECEC), this protein is Voltage-gated ClC-type chloride channel ClcB.